Reading from the N-terminus, the 247-residue chain is Uridylate kinase (247 aa).

ATP is bound at residue 21 to 24 (KVSG). Gly63 is a binding site for UMP. ATP is bound by residues Gly64 and Arg68. Residues Asp83 and 144–151 (TGNPFCTT) contribute to the UMP site. The ATP site is built by Thr171, Gln172, Tyr177, and Asp180.

The protein belongs to the UMP kinase family. Homohexamer.

It is found in the cytoplasm. It catalyses the reaction UMP + ATP = UDP + ADP. It participates in pyrimidine metabolism; CTP biosynthesis via de novo pathway; UDP from UMP (UMPK route): step 1/1. Inhibited by UTP. Its function is as follows. Catalyzes the reversible phosphorylation of UMP to UDP. This is Uridylate kinase from Rickettsia rickettsii (strain Sheila Smith).